The sequence spans 270 residues: Putative pyruvate, phosphate dikinase regulatory protein 2 (270 aa).

151–158 (GVSRTSKT) is an ADP binding site.

Belongs to the pyruvate, phosphate/water dikinase regulatory protein family. PDRP subfamily.

The catalysed reaction is N(tele)-phospho-L-histidyl/L-threonyl-[pyruvate, phosphate dikinase] + ADP = N(tele)-phospho-L-histidyl/O-phospho-L-threonyl-[pyruvate, phosphate dikinase] + AMP + H(+). It catalyses the reaction N(tele)-phospho-L-histidyl/O-phospho-L-threonyl-[pyruvate, phosphate dikinase] + phosphate + H(+) = N(tele)-phospho-L-histidyl/L-threonyl-[pyruvate, phosphate dikinase] + diphosphate. In terms of biological role, bifunctional serine/threonine kinase and phosphorylase involved in the regulation of the pyruvate, phosphate dikinase (PPDK) by catalyzing its phosphorylation/dephosphorylation. The chain is Putative pyruvate, phosphate dikinase regulatory protein 2 from Listeria welshimeri serovar 6b (strain ATCC 35897 / DSM 20650 / CCUG 15529 / CIP 8149 / NCTC 11857 / SLCC 5334 / V8).